The primary structure comprises 282 residues: Bifunctional protein FolD (282 aa).

Residues 165–167, Ser-190, and Thr-231 each bind NADP(+); that span reads GRS.

It belongs to the tetrahydrofolate dehydrogenase/cyclohydrolase family. As to quaternary structure, homodimer.

It carries out the reaction (6R)-5,10-methylene-5,6,7,8-tetrahydrofolate + NADP(+) = (6R)-5,10-methenyltetrahydrofolate + NADPH. The catalysed reaction is (6R)-5,10-methenyltetrahydrofolate + H2O = (6R)-10-formyltetrahydrofolate + H(+). It functions in the pathway one-carbon metabolism; tetrahydrofolate interconversion. Functionally, catalyzes the oxidation of 5,10-methylenetetrahydrofolate to 5,10-methenyltetrahydrofolate and then the hydrolysis of 5,10-methenyltetrahydrofolate to 10-formyltetrahydrofolate. The sequence is that of Bifunctional protein FolD from Clostridium botulinum (strain Alaska E43 / Type E3).